Consider the following 283-residue polypeptide: Pantothenate synthetase (283 aa).

ATP is bound at residue 30–37; sequence MGALHRGH. His-37 (proton donor) is an active-site residue. (R)-pantoate is bound at residue Gln-61. A beta-alanine-binding site is contributed by Gln-61. 147–150 contributes to the ATP binding site; sequence GQKD. Gln-153 is a (R)-pantoate binding site. Residues Ile-176 and 184 to 187 contribute to the ATP site; that span reads MSSR.

It belongs to the pantothenate synthetase family. In terms of assembly, homodimer.

It localises to the cytoplasm. It carries out the reaction (R)-pantoate + beta-alanine + ATP = (R)-pantothenate + AMP + diphosphate + H(+). The protein operates within cofactor biosynthesis; (R)-pantothenate biosynthesis; (R)-pantothenate from (R)-pantoate and beta-alanine: step 1/1. Catalyzes the condensation of pantoate with beta-alanine in an ATP-dependent reaction via a pantoyl-adenylate intermediate. In Cytophaga hutchinsonii (strain ATCC 33406 / DSM 1761 / CIP 103989 / NBRC 15051 / NCIMB 9469 / D465), this protein is Pantothenate synthetase.